A 118-amino-acid polypeptide reads, in one-letter code: Large ribosomal subunit protein bL20 (118 aa).

Belongs to the bacterial ribosomal protein bL20 family.

Functionally, binds directly to 23S ribosomal RNA and is necessary for the in vitro assembly process of the 50S ribosomal subunit. It is not involved in the protein synthesizing functions of that subunit. The polypeptide is Large ribosomal subunit protein bL20 (Tolumonas auensis (strain DSM 9187 / NBRC 110442 / TA 4)).